A 58-amino-acid chain; its full sequence is Metallothionein (58 aa).

The segment at Met-1 to Thr-29 is beta. Cys-5, Cys-6, Cys-10, Cys-12, Cys-17, Cys-21, Cys-23, Cys-26, Cys-28, Cys-31, Cys-34, Cys-38, Cys-40, Cys-46, Cys-50, Cys-54, Cys-56, and Cys-57 together coordinate a divalent metal cation. Residues Pro-30–Pro-58 are alpha.

It belongs to the metallothionein superfamily. Type 3 family.

Its function is as follows. Metallothioneins have a high content of cysteine residues that bind various heavy metals. Class I MTS in marine crustacea are involved in the sequestration of elevated levels of heavy-metal ions. This is Metallothionein from Carcinus maenas (Common shore crab).